A 398-amino-acid polypeptide reads, in one-letter code: Minor cardiolipin synthase ClsB (398 aa).

Residues 3–23 (VFIVIMIIVVIFFALILLDIF) form a helical membrane-spanning segment. PLD phosphodiesterase domains are found at residues 141–168 (MQKR…AEEY) and 311–338 (YQGF…DKRS).

Belongs to the phospholipase D family. Cardiolipin synthase subfamily.

It localises to the cell membrane. In terms of biological role, involved in the biosynthesis of cardiolipin. The polypeptide is Minor cardiolipin synthase ClsB (clsB) (Bacillus subtilis (strain 168)).